A 271-amino-acid chain; its full sequence is Mannosyl-3-phosphoglycerate phosphatase (271 aa).

Aspartate 13 (nucleophile) is an active-site residue. Positions 13, 15, and 214 each coordinate Mg(2+).

This sequence belongs to the HAD-like hydrolase superfamily. MPGP family. Mg(2+) is required as a cofactor.

Its subcellular location is the cytoplasm. It catalyses the reaction 2-O-(alpha-D-mannosyl)-3-phosphoglycerate + H2O = (2R)-2-O-(alpha-D-mannosyl)-glycerate + phosphate. This is Mannosyl-3-phosphoglycerate phosphatase from Escherichia coli O45:K1 (strain S88 / ExPEC).